Reading from the N-terminus, the 535-residue chain is uncharacterized protein (535 aa).

Residues 17–37 form a helical membrane-spanning segment; that stretch reads IVLLCMIGFFCTTFMRIHFAL. Residues asparagine 44 and asparagine 61 are each glycosylated (N-linked (GlcNAc...) asparagine). A run of 6 helical transmembrane segments spans residues 107 to 127, 144 to 164, 167 to 187, 199 to 219, 225 to 245, and 292 to 312; these read LIFSGTFWGSLITVLPSMFFI, ILVTVITPFLATHFGYFSVFL, IGMGLGEGFVFPTNNAIIGNW, IFTLGNQIASAAGSPMVAAVC, WPATFYFAGIFATGWSILWFF, and AFLGQLQCHFFVNLFMTLFQI. Asparagine 329 carries an N-linked (GlcNAc...) asparagine glycan. The next 5 helical transmembrane spans lie at 331–351, 368–388, 395–415, 429–451, and 463–483; these read TFTAIPNIFNMIFKVVWGIGI, VSHGVASFGSSFSLILLAFFV, TGLIFFCLMYSSMGTFVSGFY, MSAISMFVAMIGRLTTPAVMSMF, and IFIGCSLAHIFSGSIFLLFGS.

It belongs to the major facilitator superfamily. Sodium/anion cotransporter family.

The protein resides in the membrane. This is an uncharacterized protein from Caenorhabditis elegans.